Here is a 176-residue protein sequence, read N- to C-terminus: Translation initiation factor IF-3 (176 aa).

The protein belongs to the IF-3 family. Monomer.

It is found in the cytoplasm. Its function is as follows. IF-3 binds to the 30S ribosomal subunit and shifts the equilibrium between 70S ribosomes and their 50S and 30S subunits in favor of the free subunits, thus enhancing the availability of 30S subunits on which protein synthesis initiation begins. This chain is Translation initiation factor IF-3, found in Rippkaea orientalis (strain PCC 8801 / RF-1) (Cyanothece sp. (strain PCC 8801)).